The primary structure comprises 156 residues: MSRRSTAEKETAKSDPIYRNRLVNMLVNRILRHGKKSLAYRILYRAMKNIQQKTEKNPLSVLRQAIRGVTPNVTVKARRVGGSTYQVPIEIRSTQGKALAIRWSLGASRKRPPGRNMAFKLSYELMDAARENGNAIRKKEETHRMAEANRAFAHFR.

The protein belongs to the universal ribosomal protein uS7 family. As to quaternary structure, part of the 30S ribosomal subunit.

The protein resides in the plastid. Its subcellular location is the chloroplast. One of the primary rRNA binding proteins, it binds directly to 16S rRNA where it nucleates assembly of the head domain of the 30S subunit. The polypeptide is Small ribosomal subunit protein uS7c (rps7) (Zamia furfuracea (Cardboard cycad)).